The following is a 364-amino-acid chain: UDP-N-acetylglucosamine--N-acetylmuramyl-(pentapeptide) pyrophosphoryl-undecaprenol N-acetylglucosamine transferase (364 aa).

UDP-N-acetyl-alpha-D-glucosamine-binding positions include 10-12, Asn124, Arg161, Ser195, and Gln291; that span reads TAG.

The protein belongs to the glycosyltransferase 28 family. MurG subfamily.

Its subcellular location is the cell membrane. The catalysed reaction is di-trans,octa-cis-undecaprenyl diphospho-N-acetyl-alpha-D-muramoyl-L-alanyl-D-glutamyl-meso-2,6-diaminopimeloyl-D-alanyl-D-alanine + UDP-N-acetyl-alpha-D-glucosamine = di-trans,octa-cis-undecaprenyl diphospho-[N-acetyl-alpha-D-glucosaminyl-(1-&gt;4)]-N-acetyl-alpha-D-muramoyl-L-alanyl-D-glutamyl-meso-2,6-diaminopimeloyl-D-alanyl-D-alanine + UDP + H(+). Its pathway is cell wall biogenesis; peptidoglycan biosynthesis. In terms of biological role, cell wall formation. Catalyzes the transfer of a GlcNAc subunit on undecaprenyl-pyrophosphoryl-MurNAc-pentapeptide (lipid intermediate I) to form undecaprenyl-pyrophosphoryl-MurNAc-(pentapeptide)GlcNAc (lipid intermediate II). The polypeptide is UDP-N-acetylglucosamine--N-acetylmuramyl-(pentapeptide) pyrophosphoryl-undecaprenol N-acetylglucosamine transferase (Streptomyces coelicolor (strain ATCC BAA-471 / A3(2) / M145)).